Here is a 162-residue protein sequence, read N- to C-terminus: 2-C-methyl-D-erythritol 2,4-cyclodiphosphate synthase (162 aa).

A divalent metal cation contacts are provided by Asp12 and His14. Residues 12–14 (DVH) and 38–39 (HS) each bind 4-CDP-2-C-methyl-D-erythritol 2-phosphate. His46 is an a divalent metal cation binding site. Residues 60–62 (DIG), 65–69 (FPDTD), and Arg146 each bind 4-CDP-2-C-methyl-D-erythritol 2-phosphate.

The protein belongs to the IspF family. As to quaternary structure, homotrimer. A divalent metal cation is required as a cofactor.

It carries out the reaction 4-CDP-2-C-methyl-D-erythritol 2-phosphate = 2-C-methyl-D-erythritol 2,4-cyclic diphosphate + CMP. It functions in the pathway isoprenoid biosynthesis; isopentenyl diphosphate biosynthesis via DXP pathway; isopentenyl diphosphate from 1-deoxy-D-xylulose 5-phosphate: step 4/6. Functionally, involved in the biosynthesis of isopentenyl diphosphate (IPP) and dimethylallyl diphosphate (DMAPP), two major building blocks of isoprenoid compounds. Catalyzes the conversion of 4-diphosphocytidyl-2-C-methyl-D-erythritol 2-phosphate (CDP-ME2P) to 2-C-methyl-D-erythritol 2,4-cyclodiphosphate (ME-CPP) with a corresponding release of cytidine 5-monophosphate (CMP). This Bordetella bronchiseptica (strain ATCC BAA-588 / NCTC 13252 / RB50) (Alcaligenes bronchisepticus) protein is 2-C-methyl-D-erythritol 2,4-cyclodiphosphate synthase.